The primary structure comprises 321 residues: Lipoyl synthase (321 aa).

[4Fe-4S] cluster-binding residues include C68, C73, C79, C94, C98, C101, and S308. Positions 80 to 297 (FNHGTATFMI…KVIALELGFT (218 aa)) constitute a Radical SAM core domain.

This sequence belongs to the radical SAM superfamily. Lipoyl synthase family. It depends on [4Fe-4S] cluster as a cofactor.

It localises to the cytoplasm. It carries out the reaction [[Fe-S] cluster scaffold protein carrying a second [4Fe-4S](2+) cluster] + N(6)-octanoyl-L-lysyl-[protein] + 2 oxidized [2Fe-2S]-[ferredoxin] + 2 S-adenosyl-L-methionine + 4 H(+) = [[Fe-S] cluster scaffold protein] + N(6)-[(R)-dihydrolipoyl]-L-lysyl-[protein] + 4 Fe(3+) + 2 hydrogen sulfide + 2 5'-deoxyadenosine + 2 L-methionine + 2 reduced [2Fe-2S]-[ferredoxin]. The protein operates within protein modification; protein lipoylation via endogenous pathway; protein N(6)-(lipoyl)lysine from octanoyl-[acyl-carrier-protein]: step 2/2. Catalyzes the radical-mediated insertion of two sulfur atoms into the C-6 and C-8 positions of the octanoyl moiety bound to the lipoyl domains of lipoate-dependent enzymes, thereby converting the octanoylated domains into lipoylated derivatives. This Aliivibrio salmonicida (strain LFI1238) (Vibrio salmonicida (strain LFI1238)) protein is Lipoyl synthase.